Reading from the N-terminus, the 1481-residue chain is Cystic fibrosis transmembrane conductance regulator (1481 aa).

Residues 1–77 (MQRSPLEKAS…KLINALRRCF (77 aa)) lie on the Cytoplasmic side of the membrane. A helical transmembrane segment spans residues 78–98 (FWRFMFYGILLYLGEVTKAVQ). In terms of domain architecture, ABC transmembrane type-1 1 spans 81–365 (FMFYGILLYL…WAVQTWYDSL (285 aa)). Residues 99–122 (PLLLGRIIASYDPDNKEERSIAIY) are Extracellular-facing. The helical transmembrane segment at 123–146 (LGIGLCLLFIVRTLLLHPAIFGLH) threads the bilayer. At 147-195 (HIGMQMRIAMFSLIYKKTLKLSSRVLDKISIGQLVSLLSNNLNKFDEGL) the chain is on the cytoplasmic side. Residues 196 to 216 (ALAHFVWIVPLQVALLMGLIW) traverse the membrane as a helical segment. Residues 217 to 222 (ELLQAS) lie on the Extracellular side of the membrane. A helical membrane pass occupies residues 223–243 (AFCGLGFLIVLALFQAGLGRM). Over 244 to 298 (MMKYRDQRAGKINERLVITSEMIENIQSVKAYCWEEAMEKMIENLRQTELKLTRK) the chain is Cytoplasmic. A helical membrane pass occupies residues 299–319 (AAYVRYFNSSAFFFSGFFVVF). The Extracellular segment spans residues 320 to 339 (LSVLPYALIKGIVLRKIFTT). Residues 340 to 358 (ISFCIVLRMAVTRQFPWAV) traverse the membrane as a helical segment. Residues 359–858 (QTWYDSLGAI…YLRYITVHKS (500 aa)) are Cytoplasmic-facing. ATP contacts are provided by residues Trp-401, Ser-434, 458 to 465 (GSTGAGKT), and Gln-493. The region spanning 423 to 646 (NDDDSLFFSN…RPDFSSKLMG (224 aa)) is the ABC transporter 1 domain. Cys-524 carries the S-palmitoyl cysteine lipid modification. A phosphoserine mark is found at Ser-549 and Ser-660. The disordered R region stretch occupies residues 654–831 (SAERRNSILT…EEINEEDLKE (178 aa)). Phosphoserine; by PKA is present on Ser-670. Ser-686 is modified (phosphoserine). Residue Lys-688 forms a Glycyl lysine isopeptide (Lys-Gly) (interchain with G-Cter in ubiquitin) linkage. 2 positions are modified to phosphoserine: Ser-700 and Ser-712. Residue Thr-717 is modified to Phosphothreonine. A phosphoserine mark is found at Ser-737, Ser-753, Ser-768, Ser-790, Ser-795, and Ser-813. The helical transmembrane segment at 859-879 (LIFVLIWCLVIFLAEVAASLV) threads the bilayer. Residues 859–1155 (LIFVLIWCLV…AVNSSIDVDS (297 aa)) form the ABC transmembrane type-1 2 domain. Topologically, residues 880 to 918 (VLWFLGNTPPQDKGNSTYSRNNSYAVIITRTSSYYVFYI) are extracellular. Asn-894 and Asn-900 each carry an N-linked (GlcNAc...) asparagine glycan. The chain crosses the membrane as a discontinuously helical span at residues 919–939 (YVGVADTLLAMGFFRGLPLVH). The Cytoplasmic portion of the chain corresponds to 940-990 (TLITVSKILHHKMLHSVLQAPMSTLNTLKAGGILNRFSKDIAILDDLLPLT). The chain crosses the membrane as a helical span at residues 991–1011 (IFDFIQLLLIVIGAIAVVAVL). The Extracellular segment spans residues 1012–1013 (QP). The chain crosses the membrane as a helical span at residues 1014–1034 (YIFVATVPVIVAFIMLRAYFL). Residues 1035–1095 (QTSQQLKQLE…TANWFLYLST (61 aa)) are Cytoplasmic-facing. Residues 1096–1116 (LRWFQMRIEMIFVIFFIAVTF) form a helical membrane-spanning segment. The Extracellular portion of the chain corresponds to 1117–1130 (ISILTTGEGEGTVG). A helical transmembrane segment spans residues 1131–1151 (IILTLAMNIMSTLQWAVNSSI). Residues 1152 to 1481 (DVDSLMRSVS…TEEEVQDTRL (330 aa)) lie on the Cytoplasmic side of the membrane. The ABC transporter 2 domain maps to 1211–1444 (MTVKDLTAKY…RSLFRQAISP (234 aa)). ATP contacts are provided by residues Tyr-1220 and 1245–1252 (GRTGSGKS). The interaction with GORASP2 stretch occupies residues 1387–1481 (RTLKQAFADC…TEEEVQDTRL (95 aa)). Residue Cys-1396 is the site of S-palmitoyl cysteine attachment. Phosphoserine is present on residues Ser-1445 and Ser-1457. A disordered region spans residues 1462–1481 (QPQIAALKEETEEEVQDTRL). The span at 1471–1481 (ETEEEVQDTRL) shows a compositional bias: acidic residues. Positions 1479-1481 (TRL) match the PDZ-binding motif.

Belongs to the ABC transporter superfamily. ABCC family. CFTR transporter (TC 3.A.1.202) subfamily. Monomer; does not require oligomerization for channel activity. May form oligomers in the membrane. Interacts with SLC26A3, SLC26A6 and NHERF1. Interacts with SHANK2. Interacts with MYO6. Interacts (via C-terminus) with GOPC (via PDZ domain); this promotes CFTR internalization and thereby decreases channel activity. Interacts with SLC4A7 through NHERF1. Found in a complex with MYO5B and RAB11A. Interacts with ANO1. Interacts with SLC26A8. Interacts with AHCYL1; the interaction increases CFTR activity. Interacts with CSE1L. The core-glycosylated form interacts with GORASP2 (via PDZ GRASP-type 1 domain) in respone to ER stress. Interacts with MARCHF2; the interaction leads to CFTR ubiqtuitination and degradation. Interacts with ADGRG2. Post-translationally, N-glycosylated. Phosphorylated; cAMP treatment promotes phosphorylation and activates the channel. Dephosphorylation decreases the ATPase activity (in vitro). Phosphorylation at PKA sites activates the channel. Phosphorylation at PKC sites enhances the response to phosphorylation by PKA. Phosphorylated by AMPK; this inhibits channel activity. In terms of processing, ubiquitinated, leading to its degradation in the lysosome. Deubiquitination by USP10 in early endosomes enhances its endocytic recycling to the cell membrane. Ubiquitinated by RNF185 during ER stress. Ubiquitinated by MARCHF2.

Its subcellular location is the apical cell membrane. It localises to the early endosome membrane. The protein resides in the cell membrane. It is found in the recycling endosome membrane. The protein localises to the endoplasmic reticulum membrane. Its subcellular location is the nucleus. The catalysed reaction is ATP + H2O + closed Cl(-) channel = ADP + phosphate + open Cl(-) channel.. The enzyme catalyses chloride(in) = chloride(out). It catalyses the reaction hydrogencarbonate(in) = hydrogencarbonate(out). It carries out the reaction ATP + H2O = ADP + phosphate + H(+). In terms of biological role, epithelial ion channel that plays an important role in the regulation of epithelial ion and water transport and fluid homeostasis. Mediates the transport of chloride ions across the cell membrane. Possesses an intrinsic ATPase activity and utilizes ATP to gate its channel; the passive flow of anions through the channel is gated by cycles of ATP binding and hydrolysis by the ATP-binding domains. The ion channel is also permeable to HCO(3)(-); selectivity depends on the extracellular chloride concentration. Exerts its function also by modulating the activity of other ion channels and transporters. Contributes to the regulation of the pH and the ion content of the epithelial fluid layer. Modulates the activity of the epithelial sodium channel (ENaC) complex, in part by regulating the cell surface expression of the ENaC complex. May regulate bicarbonate secretion and salvage in epithelial cells by regulating the transporter SLC4A7. Can inhibit the chloride channel activity of ANO1. Plays a role in the chloride and bicarbonate homeostasis during sperm epididymal maturation and capacitation. In Chlorocebus aethiops (Green monkey), this protein is Cystic fibrosis transmembrane conductance regulator.